An 88-amino-acid polypeptide reads, in one-letter code: Cell division topological specificity factor (88 aa).

This sequence belongs to the MinE family.

In terms of biological role, prevents the cell division inhibition by proteins MinC and MinD at internal division sites while permitting inhibition at polar sites. This ensures cell division at the proper site by restricting the formation of a division septum at the midpoint of the long axis of the cell. The sequence is that of Cell division topological specificity factor from Herminiimonas arsenicoxydans.